The sequence spans 326 residues: Thrombopoietin (326 aa).

The N-terminal stretch at 1 to 21 (MELTDLLLVAILLLTARLTLS) is a signal peptide. Intrachain disulfides connect cysteine 28-cysteine 172 and cysteine 50-cysteine 106. N-linked (GlcNAc...) asparagine glycans are attached at residues asparagine 197, asparagine 206, asparagine 235, asparagine 249, and asparagine 256. The segment at 307-326 (FPPSPTFPTPGSPPQLPPVS) is disordered. Residues 308–326 (PPSPTFPTPGSPPQLPPVS) show a composition bias toward pro residues.

It belongs to the EPO/TPO family.

It localises to the secreted. In terms of biological role, lineage-specific cytokine affecting the proliferation and maturation of megakaryocytes from their committed progenitor cells. It acts at a late stage of megakaryocyte development. It may be the major physiological regulator of circulating platelets. The protein is Thrombopoietin (Thpo) of Rattus norvegicus (Rat).